We begin with the raw amino-acid sequence, 260 residues long: Hydroxyethylthiazole kinase 1 (260 aa).

Substrate is bound at residue methionine 39. Residues arginine 115 and threonine 160 each contribute to the ATP site. Glycine 187 is a substrate binding site.

Belongs to the Thz kinase family. Requires Mg(2+) as cofactor.

The enzyme catalyses 5-(2-hydroxyethyl)-4-methylthiazole + ATP = 4-methyl-5-(2-phosphooxyethyl)-thiazole + ADP + H(+). It participates in cofactor biosynthesis; thiamine diphosphate biosynthesis; 4-methyl-5-(2-phosphoethyl)-thiazole from 5-(2-hydroxyethyl)-4-methylthiazole: step 1/1. Functionally, catalyzes the phosphorylation of the hydroxyl group of 4-methyl-5-beta-hydroxyethylthiazole (THZ). In Streptococcus pneumoniae serotype 4 (strain ATCC BAA-334 / TIGR4), this protein is Hydroxyethylthiazole kinase 1.